The following is a 416-amino-acid chain: Ena/VASP-like protein (416 aa).

A WH1 domain is found at 1 to 112 (MSEQSICQAR…NAMLFALNIM (112 aa)). The span at 114–129 (SQEGGPSSQRQVQNGP) shows a compositional bias: polar residues. Disordered stretches follow at residues 114-133 (SQEG…SPDE) and 141-369 (VMEQ…PAGS). Residue S130 is modified to Phosphoserine. Basic and acidic residues predominate over residues 141–157 (VMEQHQQQRQESLERRT). Positions 169-180 (PSSAASAPVSCS) are enriched in low complexity. Pro residues predominate over residues 181 to 206 (GPPPPPPPPVPPPPTGATPPPPPPLP). The segment at 222-242 (GLAAAIAGAKLRRVQRPEDAS) is EVH2 block A. Residues 222–413 (GLAAAIAGAK…DAIRQELSGI (192 aa)) are EVH2. The short motif at 231–234 (KLRR) is the KLKR element. Positions 242–253 (SGGSSPSGTSKS) are enriched in low complexity. A phosphoserine mark is found at S246 and S259. Residues 265 to 282 (GGLMEEMNKLLAKRRKAA) are EVH2 block B. Positions 299 to 320 (EDPSTSPSPGTRAASQPPNSSE) are enriched in polar residues. A phosphoserine mark is found at S304, S306, S329, S331, S341, S349, S354, and S369. A compositionally biased stretch (basic and acidic residues) spans 321 to 331 (AGRKPWERSNS). The interval 342–362 (RTPSVAKSPEAKSPLQSQPHS) is required for interaction with ZDHHC17. The EVH2 block C stretch occupies residues 379–413 (DLDRMKQEILEEVVRELHKVKEEIIDAIRQELSGI).

Belongs to the Ena/VASP family. As to quaternary structure, homotetramer. Binds to the SH3 domains of ABL1, LYN and SRC. Also binds to profilin, with preference for isoform IIa of PFN2, and the WW domain of APBB1/FE65. Binds to SEMA6A. Interacts, via the Pro-rich region, with the C-terminal SH3 domain of DNMBP. Interacts with RAPH1. Binds, via the EVH1 domain, the Pro-rich domain of Listeria monocytogenes actA. Binds, via the EVH1 domain, the Pro-rich domain of ZYX. Interacts with FYB1. Interacts with ZDHHC17. In terms of processing, phosphorylated by PKA; phosphorylation abolishes binding to SH3 domains of ABL and SRC.

It is found in the cytoplasm. The protein localises to the cytoskeleton. Its subcellular location is the stress fiber. The protein resides in the cell projection. It localises to the lamellipodium. Ena/VASP proteins are actin-associated proteins involved in a range of processes dependent on cytoskeleton remodeling and cell polarity such as axon guidance and lamellipodial and filopodial dynamics in migrating cells. EVL enhances actin nucleation and polymerization. The protein is Ena/VASP-like protein (EVL) of Homo sapiens (Human).